Consider the following 134-residue polypeptide: Flagellar basal-body rod protein FlgC (134 aa).

Belongs to the flagella basal body rod proteins family. The basal body constitutes a major portion of the flagellar organelle and consists of four rings (L,P,S, and M) mounted on a central rod. The rod consists of about 26 subunits of FlgG in the distal portion, and FlgB, FlgC and FlgF are thought to build up the proximal portion of the rod with about 6 subunits each.

The protein resides in the bacterial flagellum basal body. The protein is Flagellar basal-body rod protein FlgC (flgC) of Salmonella typhi.